The sequence spans 286 residues: Nucleotide-binding protein VC_2532 (286 aa).

8–15 contacts ATP; that stretch reads GQSGAGKS. A GTP-binding site is contributed by 56-59; that stretch reads DIRN.

This sequence belongs to the RapZ-like family.

Functionally, displays ATPase and GTPase activities. This Vibrio cholerae serotype O1 (strain ATCC 39315 / El Tor Inaba N16961) protein is Nucleotide-binding protein VC_2532.